A 271-amino-acid chain; its full sequence is Repressed by EFG1 protein 1 (271 aa).

The signal sequence occupies residues 1-19 (MKITNTLLNAAALLAVTEA). A disordered region spans residues 59 to 118 (QLTSKTQDSTSPTTSSVNSLTSSSATSYVETTTPAPSSSTLTTSTISSSTASEDSDATPT). A compositionally biased stretch (low complexity) spans 67–118 (STSPTTSSVNSLTSSSATSYVETTTPAPSSSTLTTSTISSSTASEDSDATPT). Residues 128–244 (LKEHNVKRAL…AWRQITVCEY (117 aa)) form the SCP domain. Asn-254 carries N-linked (GlcNAc...) asparagine glycosylation.

This sequence belongs to the CRISP family.

It is found in the secreted. Its subcellular location is the cell wall. Its function is as follows. Cell wall protein involved in cell wall integrity and which plays a role in virulence. The sequence is that of Repressed by EFG1 protein 1 (RBE1) from Candida albicans (strain SC5314 / ATCC MYA-2876) (Yeast).